Consider the following 136-residue polypeptide: Small ribosomal subunit protein uS9 (136 aa).

The disordered stretch occupies residues 97-136 (SPDNRKPLKTEGHLSRDPRAKERRKYGLKKARKAPQFSKR). The segment covering 98-116 (PDNRKPLKTEGHLSRDPRA) has biased composition (basic and acidic residues). A compositionally biased stretch (basic residues) spans 117–136 (KERRKYGLKKARKAPQFSKR).

It belongs to the universal ribosomal protein uS9 family.

The protein is Small ribosomal subunit protein uS9 of Prochlorococcus marinus (strain AS9601).